The following is a 58-amino-acid chain: Ranakinin-N (58 aa).

Residues 1-22 form the signal peptide; the sequence is MFTMKKSLLLLFFLGTISMSLC. Residues 23 to 43 constitute a propeptide that is removed on maturation; the sequence is EEKRDADEEETEGEAKMEDIK. Residues 25 to 58 form a disordered region; sequence KRDADEEETEGEAKMEDIKRAEAVPPGFTPFRKP. Positions 35–46 are enriched in basic and acidic residues; it reads GEAKMEDIKRAE.

In terms of tissue distribution, expressed by the skin glands.

It localises to the secreted. Induces contraction of intestinal smooth muscle in isolated guinea pig ileum. May induce relaxation of arterial smooth muscle. May target bradykinin receptors (BDKRB). Lacks antibacterial activity against the Gram-positive bacterium S.aureus and the Gram-negative bacteria E.coli and B.dysenteria, and antifungal activity against C.albicans. The sequence is that of Ranakinin-N from Hylarana nigrovittata (Black-striped frog).